A 439-amino-acid chain; its full sequence is Capsid vertex component 1 (439 aa).

It belongs to the herpesviridae CVC1 protein family. Interacts (via C-terminus) with capsid vertex component 2/CVC2.

It is found in the virion. It localises to the host nucleus. Its function is as follows. Capsid vertex-specific component that plays a role during viral DNA encapsidation, assuring correct genome cleavage and presumably stabilizing capsids that contain full-length viral genomes. This chain is Capsid vertex component 1, found in Homo sapiens (Human).